The primary structure comprises 523 residues: GMP synthase [glutamine-hydrolyzing] (523 aa).

The Glutamine amidotransferase type-1 domain occupies 8–205; sequence KILILDFGSQ…VVDICGCETN (198 aa). C85 serves as the catalytic Nucleophile. Catalysis depends on residues H179 and E181. The region spanning 206 to 398 is the GMPS ATP-PPase domain; it reads WTAENIIEDA…LGLPAEMLNR (193 aa). 233-239 contacts ATP; the sequence is SGGVDSS.

Homodimer.

It catalyses the reaction XMP + L-glutamine + ATP + H2O = GMP + L-glutamate + AMP + diphosphate + 2 H(+). Its pathway is purine metabolism; GMP biosynthesis; GMP from XMP (L-Gln route): step 1/1. In terms of biological role, catalyzes the synthesis of GMP from XMP. In Histophilus somni (strain 129Pt) (Haemophilus somnus), this protein is GMP synthase [glutamine-hydrolyzing].